Reading from the N-terminus, the 352-residue chain is Holliday junction branch migration complex subunit RuvB (352 aa).

The segment at alanine 4 to tyrosine 185 is large ATPase domain (RuvB-L). ATP-binding positions include isoleucine 24, arginine 25, glycine 66, lysine 69, threonine 70, threonine 71, glutamate 132–phenylalanine 134, arginine 175, tyrosine 185, and arginine 222. Threonine 70 lines the Mg(2+) pocket. Positions serine 186 to aspartate 256 are small ATPAse domain (RuvB-S). The head domain (RuvB-H) stretch occupies residues glutamate 259–aspartate 352. DNA is bound by residues arginine 295, arginine 314, and arginine 319.

The protein belongs to the RuvB family. In terms of assembly, homohexamer. Forms an RuvA(8)-RuvB(12)-Holliday junction (HJ) complex. HJ DNA is sandwiched between 2 RuvA tetramers; dsDNA enters through RuvA and exits via RuvB. An RuvB hexamer assembles on each DNA strand where it exits the tetramer. Each RuvB hexamer is contacted by two RuvA subunits (via domain III) on 2 adjacent RuvB subunits; this complex drives branch migration. In the full resolvosome a probable DNA-RuvA(4)-RuvB(12)-RuvC(2) complex forms which resolves the HJ.

It localises to the cytoplasm. The enzyme catalyses ATP + H2O = ADP + phosphate + H(+). Its function is as follows. The RuvA-RuvB-RuvC complex processes Holliday junction (HJ) DNA during genetic recombination and DNA repair, while the RuvA-RuvB complex plays an important role in the rescue of blocked DNA replication forks via replication fork reversal (RFR). RuvA specifically binds to HJ cruciform DNA, conferring on it an open structure. The RuvB hexamer acts as an ATP-dependent pump, pulling dsDNA into and through the RuvAB complex. RuvB forms 2 homohexamers on either side of HJ DNA bound by 1 or 2 RuvA tetramers; 4 subunits per hexamer contact DNA at a time. Coordinated motions by a converter formed by DNA-disengaged RuvB subunits stimulates ATP hydrolysis and nucleotide exchange. Immobilization of the converter enables RuvB to convert the ATP-contained energy into a lever motion, pulling 2 nucleotides of DNA out of the RuvA tetramer per ATP hydrolyzed, thus driving DNA branch migration. The RuvB motors rotate together with the DNA substrate, which together with the progressing nucleotide cycle form the mechanistic basis for DNA recombination by continuous HJ branch migration. Branch migration allows RuvC to scan DNA until it finds its consensus sequence, where it cleaves and resolves cruciform DNA. This chain is Holliday junction branch migration complex subunit RuvB, found in Pseudomonas fluorescens (strain ATCC BAA-477 / NRRL B-23932 / Pf-5).